Reading from the N-terminus, the 206-residue chain is RNA pyrophosphohydrolase (206 aa).

In terms of domain architecture, Nudix hydrolase spans 6-150 (GYRPNVGIVI…KRDVYRKVMK (145 aa)). Positions 38–59 (GGINEGENIETAMYRELYEEVG) match the Nudix box motif. Residues 162–191 (KPETVEKPRVERTEKRDFQKRDNQKREFRK) show a composition bias toward basic and acidic residues. A disordered region spans residues 162–206 (KPETVEKPRVERTEKRDFQKRDNQKREFRKSARTWNNSHQKGKAQ).

It belongs to the Nudix hydrolase family. RppH subfamily. A divalent metal cation is required as a cofactor.

Functionally, accelerates the degradation of transcripts by removing pyrophosphate from the 5'-end of triphosphorylated RNA, leading to a more labile monophosphorylated state that can stimulate subsequent ribonuclease cleavage. This Actinobacillus pleuropneumoniae serotype 3 (strain JL03) protein is RNA pyrophosphohydrolase.